The chain runs to 245 residues: MLQNIRIVLVETSHTGNMGSVARAMKTMGLTNLWLVNPLVKPDSQAIALAAGASDVIGNASIVDTLDEALAGCSLVVGTSARSRTLPWPMLDPRECGLKSVSEATHAPVAIVFGRERVGLTNDELQKCHYHVAIAANPEYSSLNLAMAVQVIAYEVRMAWLASQDAQTPAPGEEETPYPLVDDLERFYGHLEQVLLSTGFIRPNHPGQVMNKLRRLFTRARPESQELNILRGMLASIESSRNEKP.

Residues 79–81 (TSA), Gly114, Ile134, and 141–143 (SSL) contribute to the S-adenosyl-L-methionine site.

This sequence belongs to the class IV-like SAM-binding methyltransferase superfamily. RNA methyltransferase TrmH family. As to quaternary structure, homodimer.

It is found in the cytoplasm. It catalyses the reaction cytidine(32) in tRNA + S-adenosyl-L-methionine = 2'-O-methylcytidine(32) in tRNA + S-adenosyl-L-homocysteine + H(+). The enzyme catalyses uridine(32) in tRNA + S-adenosyl-L-methionine = 2'-O-methyluridine(32) in tRNA + S-adenosyl-L-homocysteine + H(+). Catalyzes the formation of 2'O-methylated cytidine (Cm32) or 2'O-methylated uridine (Um32) at position 32 in tRNA. In Cronobacter sakazakii (strain ATCC BAA-894) (Enterobacter sakazakii), this protein is tRNA (cytidine/uridine-2'-O-)-methyltransferase TrmJ (trmJ).